The chain runs to 310 residues: MAFPKMRLMYICLLVLGALCLYFSMYSLNPFKEQSFVYKKDGNFLKLPDTDCRQTPPFLVLLVTSSHKQLAERMAIRQTWGKERMVKGKQLKTFFLLGTTSSAAETKEVDQESQRHGDIIQKDFLDVYYNLTLKTMMGIEWVHRFCPQAAFVMKTDSDMFINVDYLTELLLKKNRTTRFFTGFLKLNEFPIRQPFSKWFVSKSEYPWDRYPPFCSGTGYVFSGDVASQVYNVSKSVPYIKLEDVFVGLCLERLNIRLEELHSQPTFFPGGLRFSVCLFRRIVACHFIKPRTLLDYWQALENSRGEDCPPV.

Topologically, residues Met1 to Arg7 are cytoplasmic. A helical; Signal-anchor for type II membrane protein membrane pass occupies residues Leu8–Leu28. Over Asn29–Val310 the chain is Lumenal. 3 N-linked (GlcNAc...) asparagine glycosylation sites follow: Asn130, Asn174, and Asn231.

Belongs to the glycosyltransferase 31 family. As to expression, expressed in stomach, jejunum, colon, pancreas, small intestine, testis and gastrointestinal and pancreatic cancer cell lines. Hardly detected in lung, liver, adrenal gland and peripheral blood leukocytes.

The protein resides in the golgi apparatus membrane. It carries out the reaction a globoside Gb4Cer (d18:1(4E)) + UDP-alpha-D-galactose = a globoside GalGb4Cer (d18:1(4E)) + UDP + H(+). The protein operates within protein modification; protein glycosylation. Its function is as follows. Catalyzes the transfer of Gal to GlcNAc-based acceptors with a preference for the core3 O-linked glycan GlcNAc(beta1,3)GalNAc structure. Can use glycolipid LC3Cer as an efficient acceptor. The chain is Beta-1,3-galactosyltransferase 5 from Homo sapiens (Human).